The sequence spans 268 residues: Nickel import ATP-binding protein NikE (268 aa).

An ABC transporter domain is found at 4–252; sequence LNVSDLSHHY…SSDAGRVLQN (249 aa). 45–52 lines the ATP pocket; it reads GRSGCGKS.

The protein belongs to the ABC transporter superfamily. Nickel importer (TC 3.A.1.5.3) family. As to quaternary structure, the complex is composed of two ATP-binding proteins (NikD and NikE), two transmembrane proteins (NikB and NikC) and a solute-binding protein (NikA).

It localises to the cell inner membrane. The enzyme catalyses Ni(2+)(out) + ATP + H2O = Ni(2+)(in) + ADP + phosphate + H(+). Its function is as follows. Part of the ABC transporter complex NikABCDE involved in nickel import. Responsible for energy coupling to the transport system. In Escherichia coli O6:K15:H31 (strain 536 / UPEC), this protein is Nickel import ATP-binding protein NikE.